A 455-amino-acid chain; its full sequence is Eukaryotic translation initiation factor 3 subunit E (455 aa).

The region spanning Thr256 to Gln425 is the PCI domain.

This sequence belongs to the eIF-3 subunit E family. Component of the eukaryotic translation initiation factor 3 (eIF-3) complex.

It localises to the cytoplasm. Component of the eukaryotic translation initiation factor 3 (eIF-3) complex, which is involved in protein synthesis of a specialized repertoire of mRNAs and, together with other initiation factors, stimulates binding of mRNA and methionyl-tRNAi to the 40S ribosome. The eIF-3 complex specifically targets and initiates translation of a subset of mRNAs involved in cell proliferation. The polypeptide is Eukaryotic translation initiation factor 3 subunit E (int6) (Neosartorya fischeri (strain ATCC 1020 / DSM 3700 / CBS 544.65 / FGSC A1164 / JCM 1740 / NRRL 181 / WB 181) (Aspergillus fischerianus)).